We begin with the raw amino-acid sequence, 698 residues long: Topoisomerase subunit TopoN (698 aa).

Lys-429 participates in a covalent cross-link: Isoglutamyl lysine isopeptide (Lys-Gln) (interchain with Q-Cter in protein Pup). The disordered stretch occupies residues 443–473 (GAKARARAASKAKGLGTNLSLPPKLLPSRES). Positions 479 to 593 (AELFLCEGDS…AGMVYVTMPP (115 aa)) constitute a Toprim domain.

The protein belongs to the type II topoisomerase family. In terms of assembly, a complex of TopoN and TopoM, possibly a heterotetramer. Requires Mg(2+) as cofactor.

The enzyme catalyses ATP-dependent breakage, passage and rejoining of double-stranded DNA.. Its activity is regulated as follows. Inhibited by quinolone antibiotic ciprofloxacin and coumarin antibiotic novobiocin, but at much higher concentrations than is usual for DNA gyrase/topoisomerase. Its function is as follows. Catalyzes the relaxation of negatively supercoiled DNA in the presence of ATP or dATP but not other nucleotides. Individual subunits have no activity. Not able to negatively supercoil DNA, it can however introduce positive supercoils in DNA. Relaxes positive supercoils in an ATP-dependent manner. Catenates and decatenates DNA. Generates dsDNA breaks in the presence of the quinolone antibiotic ciprofloxacin, showing it is a topoisomerase. This is Topoisomerase subunit TopoN from Mycolicibacterium smegmatis (strain ATCC 700084 / mc(2)155) (Mycobacterium smegmatis).